The sequence spans 349 residues: Ethyl acetate hydrolase (349 aa).

An AB hydrolase-1 domain is found at 67 to 300 (YIGEGRALDP…SHDQFFTVDD (234 aa)). Catalysis depends on Ser139, which acts as the Nucleophile. Catalysis depends on residues Asp293 and His322.

Belongs to the AB hydrolase superfamily. Acetyl esterase family. Homodimer.

The catalysed reaction is ethyl acetate + H2O = ethanol + acetate + H(+). In terms of biological role, esterase that catalyzes the hydrolysis of ethyl acetate. Involved in the degradation of short chain methyl ketones (MEK) such as 2-butanone and 2-hexanone. In vitro, can also hydrolyze vinyl acetate, 4-nitrophenyl acetate, methyl acetate, propyl acetate, benzyl acetate and methyl propionate. The highest activities are obtained with acetic acid esters, but the alcohol group also plays an important role, as compounds with two carbon atoms in the alcohol moiety, i.e., vinyl and ethyl acetate, are by far the preferred substrates. The sequence is that of Ethyl acetate hydrolase from Pseudomonas veronii.